A 488-amino-acid polypeptide reads, in one-letter code: E3 ubiquitin-protein ligase TRIM39 (488 aa).

The RING-type zinc-finger motif lies at 29-70; sequence CSVCLEYLKEPVIIECGHNFCKACITRWWEDLERDFPCPVCR. Residues 102-143 form a B box-type zinc finger; that stretch reads RDESLCSQHHEPLSLFCYEDQEAVCLICAISHTHRAHTVVPM. The Zn(2+) site is built by cysteine 107, histidine 110, cysteine 129, and histidine 135. Residues 181–250 adopt a coiled-coil conformation; sequence ELKRLVESRR…AHLAAEVEGK (70 aa). Interaction with CDKN1A regions lie at residues 268–307 and 359–488; these read KCEKVKTMEVTSVSIELEKNFSHFPRQYFALRKILKQLIA and TSGR…TDWE. The 196-residue stretch at 289–484 folds into the B30.2/SPRY domain; the sequence is SHFPRQYFAL…NAAPLTIRPP (196 aa).

Belongs to the TRIM/RBCC family. In terms of assembly, interacts with MOAP1. Interacts with CDKN1A. Autoubiquitinated.

The protein localises to the cytoplasm. Its subcellular location is the cytosol. It localises to the mitochondrion. The protein resides in the nucleus. The catalysed reaction is S-ubiquitinyl-[E2 ubiquitin-conjugating enzyme]-L-cysteine + [acceptor protein]-L-lysine = [E2 ubiquitin-conjugating enzyme]-L-cysteine + N(6)-ubiquitinyl-[acceptor protein]-L-lysine.. It participates in protein modification; protein ubiquitination. E3 ubiquitin-protein ligase. May facilitate apoptosis by inhibiting APC/C-Cdh1-mediated poly-ubiquitination and subsequent proteasome-mediated degradation of the pro-apoptotic protein MOAP1. Regulates the G1/S transition of the cell cycle and DNA damage-induced G2 arrest by stabilizing CDKN1A/p21. Positively regulates CDKN1A/p21 stability by competing with DTL for CDKN1A/p21 binding, therefore disrupting DCX(DTL) E3 ubiquitin ligase complex-mediated CDKN1A/p21 ubiquitination and degradation. This Rattus norvegicus (Rat) protein is E3 ubiquitin-protein ligase TRIM39 (Trim39).